Here is a 273-residue protein sequence, read N- to C-terminus: Undecaprenyl-diphosphatase (273 aa).

8 helical membrane passes run 13 to 35, 45 to 65, 90 to 110, 116 to 136, 157 to 177, 190 to 210, 222 to 242, and 252 to 272; these read LGVVEGLTEFLPVSSTGHMIIVG, ANTFEVVIQLGSILAVVVMFW, LSLIHILLGMIPAVVMGLIFH, LFNPVNVMYALIVGGVLLIAA, AFVIGCFQCLALWPGFSRSGA, YAASEFSFLLAVPMMMGATVL, GDVPMFAVGFVMAFIVALIAI, and ISFIPFAIYRFIVAAAVYVVF.

It belongs to the UppP family.

The protein resides in the cell inner membrane. It carries out the reaction di-trans,octa-cis-undecaprenyl diphosphate + H2O = di-trans,octa-cis-undecaprenyl phosphate + phosphate + H(+). Catalyzes the dephosphorylation of undecaprenyl diphosphate (UPP). Confers resistance to bacitracin. This is Undecaprenyl-diphosphatase from Klebsiella pneumoniae subsp. pneumoniae (strain ATCC 700721 / MGH 78578).